A 229-amino-acid chain; its full sequence is Leucyl/phenylalanyl-tRNA--protein transferase (229 aa).

This sequence belongs to the L/F-transferase family.

It localises to the cytoplasm. The catalysed reaction is N-terminal L-lysyl-[protein] + L-leucyl-tRNA(Leu) = N-terminal L-leucyl-L-lysyl-[protein] + tRNA(Leu) + H(+). It catalyses the reaction N-terminal L-arginyl-[protein] + L-leucyl-tRNA(Leu) = N-terminal L-leucyl-L-arginyl-[protein] + tRNA(Leu) + H(+). The enzyme catalyses L-phenylalanyl-tRNA(Phe) + an N-terminal L-alpha-aminoacyl-[protein] = an N-terminal L-phenylalanyl-L-alpha-aminoacyl-[protein] + tRNA(Phe). In terms of biological role, functions in the N-end rule pathway of protein degradation where it conjugates Leu, Phe and, less efficiently, Met from aminoacyl-tRNAs to the N-termini of proteins containing an N-terminal arginine or lysine. This Pseudomonas syringae pv. tomato (strain ATCC BAA-871 / DC3000) protein is Leucyl/phenylalanyl-tRNA--protein transferase.